Consider the following 426-residue polypeptide: 26S proteasome regulatory subunit 7 (426 aa).

209-216 (GPPGTGKT) is a binding site for ATP.

It belongs to the AAA ATPase family.

The protein resides in the cytoplasm. The protein localises to the nucleus. In terms of biological role, the 26S proteasome is involved in the ATP-dependent degradation of ubiquitinated proteins. The regulatory (or ATPase) complex confers ATP dependency and substrate specificity to the 26S complex. The sequence is that of 26S proteasome regulatory subunit 7 (RPT1) from Spinacia oleracea (Spinach).